Reading from the N-terminus, the 712-residue chain is MFNYYRKEIEWGGRPLVLETGKIARQADGAVVVTYGDTVVLCTAVGARSVKPGQDFFPLTVNYQEKAFAAGKIPGGFFKREGRPSEIEVLNSRLIDRPIRPLFPENFRNEVQVVATVLSHDLENDPAIAALIGCSAALTLSGIPFFGPVAACRVGYADGAYILNPTLPEMKESALDLVVAGTSEGVLMVESEASELSEDVMLGAVTFGHEAFQAVIDAIISLAEHAAKAPWDLAEPSAEEIALKQRIDTLGRAAIAEAYQERVKQQRYKKVGAAKEAVLAALATEGLDVTAAKPILKDLEADVVRSAVLDTGYRIDGRDLKTVRPIVSEVGILPRAHGSALFTRGETQALVVATLGTAQDEQVIDALEGEYRTNFMLHYNFPPYSVGECGRMGSPGRREIGHGKLAWRAIHPLLPGKDTFPYTMRIVSEITESNGSSSMATVCGTSLALMDAGVPLKRPVAGIAMGLIKEDRGFAVLSDILGDEDHLGDMDFKVAGTESGITALQMDIKITSITPEIMKIALGQARDGRLHILGEMSKALTEGRSDVSSTAPKITTISVPKEKIRDVIGQGGKVIREIVEYSGAKIDINDDGTIMIAASSEDQATRAIERIRGIVAEPELGAIYTGKVVKTADFGAFVNFLGARDGLVHISELAQGRVAKTTDVVNQGDVVKVKVLGFDDRGKVKLSMRVVDQQTGADITESVGERPGRPAR.

Mg(2+) contacts are provided by aspartate 485 and aspartate 491. The region spanning 552-611 (PKITTISVPKEKIRDVIGQGGKVIREIVEYSGAKIDINDDGTIMIAASSEDQATRAIERI) is the KH domain. In terms of domain architecture, S1 motif spans 621 to 689 (GAIYTGKVVK…DRGKVKLSMR (69 aa)).

Belongs to the polyribonucleotide nucleotidyltransferase family. Mg(2+) serves as cofactor.

It is found in the cytoplasm. The enzyme catalyses RNA(n+1) + phosphate = RNA(n) + a ribonucleoside 5'-diphosphate. Functionally, involved in mRNA degradation. Catalyzes the phosphorolysis of single-stranded polyribonucleotides processively in the 3'- to 5'-direction. The chain is Polyribonucleotide nucleotidyltransferase from Gluconacetobacter diazotrophicus (strain ATCC 49037 / DSM 5601 / CCUG 37298 / CIP 103539 / LMG 7603 / PAl5).